Consider the following 139-residue polypeptide: Large ribosomal subunit protein uL24 (139 aa).

Residues 1–25 (MKRNTNVSSSRRKSRKAHFTASSGE) are disordered.

This sequence belongs to the universal ribosomal protein uL24 family.

This chain is Large ribosomal subunit protein uL24 (rpl26), found in Dictyostelium discoideum (Social amoeba).